Here is a 472-residue protein sequence, read N- to C-terminus: MKRLNLLCCCVASLLLLGTAEEVEDASEPTKRDRSHLENTLKLNEDKPADDFSGVLQRLRKIYHASIKPLEQSYRYNELRQHEITDGEITSKPMVLFLGPWSVGKSSMINYLLGLDDTPYQLYTGAEPTTSEFTVIMHGPKLKTIEGIVMAADSARSFSPLEKFGQNFLEKLIGIEVPHKLLERVTFVDTPGIIENRKQQERGYPFNDVCQWFIDRADLIFVVFDPTKLDVGLELEMLFRQLKGRESQIRIILNKADSLATQELMRVYGALFWSLAPLINVTEPPRVYVSSFWPHEYHPDTHKDLFLKEEISLLEDLNQVIENRMENKIAFIRQHAIRVRIHALLVDRYLQTYKDKMTFFSDGELVFRDIVEDPDKFFIFKSILAKTNVSKFDLPNREAYKDFFGINPITSFKLLSQQCSYMGGCYLEKIEKAITRELPDLLGSIGLGKKPNVLSCDVTGCGETPKNRYKKP.

Positions 1–20 are cleaved as a signal peptide; sequence MKRLNLLCCCVASLLLLGTA. Leucine 59 carries an N-linked (GlcNAc...) asparagine glycan. One can recognise a Dynamin-type G domain in the interval 89–330; sequence ITSKPMVLFL…IENRMENKIA (242 aa). The interval 99-106 is G1 motif; it reads GPWSVGKS. The G2 motif stretch occupies residues 127 to 128; the sequence is EP. The interval 189 to 192 is G3 motif; sequence DTPG. Positions 254–257 are G4 motif; it reads NKAD. Residue leucine 278 is a region of interest, G5 motif. Asparagine 280 and asparagine 388 each carry an N-linked (GlcNAc...) asparagine glycan.

The protein belongs to the TRAFAC class dynamin-like GTPase superfamily. Dynamin/Fzo/YdjA family. In terms of processing, N-glycosylated.

The protein resides in the sarcoplasmic reticulum lumen. It is found in the sarcoplasmic reticulum membrane. This chain is Sarcalumenin (SRL), found in Gallus gallus (Chicken).